We begin with the raw amino-acid sequence, 272 residues long: Shikimate dehydrogenase (NADP(+)) (272 aa).

Shikimate is bound by residues S14–S16 and T61. K65 functions as the Proton acceptor in the catalytic mechanism. Residue E77 coordinates NADP(+). Residues N86 and D102 each contribute to the shikimate site. Residues G126–A130, N149–R154, and M213 contribute to the NADP(+) site. Y215 provides a ligand contact to shikimate. Position 237 (G237) interacts with NADP(+).

It belongs to the shikimate dehydrogenase family. As to quaternary structure, homodimer.

It carries out the reaction shikimate + NADP(+) = 3-dehydroshikimate + NADPH + H(+). It functions in the pathway metabolic intermediate biosynthesis; chorismate biosynthesis; chorismate from D-erythrose 4-phosphate and phosphoenolpyruvate: step 4/7. Functionally, involved in the biosynthesis of the chorismate, which leads to the biosynthesis of aromatic amino acids. Catalyzes the reversible NADPH linked reduction of 3-dehydroshikimate (DHSA) to yield shikimate (SA). This chain is Shikimate dehydrogenase (NADP(+)), found in Escherichia coli O6:H1 (strain CFT073 / ATCC 700928 / UPEC).